We begin with the raw amino-acid sequence, 330 residues long: 1,8-cineole synthase (330 aa).

Aspartate 81 lines the Mg(2+) pocket. Residues 81–85 (DDHFD) carry the DDXXD motif motif. Arginine 174 contributes to the substrate binding site. 2 residues coordinate Mg(2+): asparagine 220 and serine 224. Positions 220–228 (NDVLSLEKE) match the NXXXSXXXE motif motif. Lysine 227 serves as a coordination point for substrate. Glutamate 228 lines the Mg(2+) pocket. Position 314–315 (314–315 (RY)) interacts with substrate.

It belongs to the terpene synthase family. In terms of assembly, homodimer. Requires Mg(2+) as cofactor.

The catalysed reaction is (2E)-geranyl diphosphate + H2O = 1,8-cineole + diphosphate. It catalyses the reaction neryl diphosphate + H2O = 1,8-cineole + diphosphate. In vitro, catalyzes the formation of 1,8-cineole from geranyl diphosphate (GPP). Can also accept neryl diphosphate (NPP) as substrate to produce 1,8-cineole. In Streptomyces clavuligerus, this protein is 1,8-cineole synthase.